A 60-amino-acid chain; its full sequence is Ixodegrin-like peptide (60 aa).

An N-terminal signal peptide occupies residues 1–19 (MNAVFIAALLILGTSTFDA). The short motif at 49–51 (RGD) is the Cell attachment site element.

It belongs to the ixodegrin family. In terms of processing, contains 3 disulfide bonds. Expressed in salivary glands.

The protein resides in the secreted. In terms of biological role, tick salivary platelet aggregation inhibitor that plays an important part in the anti-hemostatic strategy of ticks. Inhibits platelet aggregation induced by ADP, thrombin and thromboxane A2 (TXA2). Blocks platelet adhesion to soluble collagen (most probably through the binding to alpha-2/beta-1 integrin (ITGA2/ITGB1)) and binds to purified glycoprotein IIb/IIIa (ITGA2B/ITGB3) in a dose-dependent manner. In vivo, reduces thrombus weight effectively in a rat arteriovenous shunt model and inhibits thrombosis in a carrageenan-induced mouse tail thrombosis model. The chain is Ixodegrin-like peptide from Ixodes scapularis (Black-legged tick).